Here is a 363-residue protein sequence, read N- to C-terminus: GTP-binding protein 1 (363 aa).

Positions 63-287 (ARVAFIGFPS…LKERIWEELN (225 aa)) constitute an OBG-type G domain. GTP contacts are provided by residues 69 to 76 (GFPSVGKS), 115 to 119 (DLPGI), and 246 to 249 (KIDA). One can recognise a TGS domain in the interval 287 to 362 (NLYRIYTKRK…EEGDVVTIVT (76 aa)).

Belongs to the TRAFAC class OBG-HflX-like GTPase superfamily. OBG GTPase family.

This is GTP-binding protein 1 (gtp1) from Schizosaccharomyces pombe (strain 972 / ATCC 24843) (Fission yeast).